A 306-amino-acid chain; its full sequence is Ornithine carbamoyltransferase 1, anabolic (306 aa).

Carbamoyl phosphate contacts are provided by residues 53–56 (STRT), Q80, R104, and 131–134 (HPCQ). L-ornithine is bound by residues N162, D219, and 223–224 (SM). Carbamoyl phosphate contacts are provided by residues 259–260 (CL) and R287.

It belongs to the aspartate/ornithine carbamoyltransferase superfamily. OTCase family. In terms of assembly, homotrimer.

The protein localises to the cytoplasm. The catalysed reaction is carbamoyl phosphate + L-ornithine = L-citrulline + phosphate + H(+). The protein operates within amino-acid biosynthesis; L-arginine biosynthesis; L-arginine from L-ornithine and carbamoyl phosphate: step 1/3. With respect to regulation, reversibly inhibited by inhibited by phaseolotoxin and octicidine. Its function is as follows. Reversibly catalyzes the transfer of the carbamoyl group from carbamoyl phosphate (CP) to the N(epsilon) atom of ornithine (ORN) to produce L-citrulline, which is a substrate for argininosuccinate synthetase, the enzyme involved in the final step in arginine biosynthesis. The protein is Ornithine carbamoyltransferase 1, anabolic of Pseudomonas savastanoi pv. phaseolicola (Pseudomonas syringae pv. phaseolicola).